Consider the following 66-residue polypeptide: UPF0434 protein Jann_0424 (66 aa).

This sequence belongs to the UPF0434 family.

In Jannaschia sp. (strain CCS1), this protein is UPF0434 protein Jann_0424.